Here is an 829-residue protein sequence, read N- to C-terminus: ATP-dependent RNA helicase drs1 (829 aa).

Disordered stretches follow at residues 1–96 and 145–295; these read MAPS…MDTE and RRER…MSSF. Positions 20–32 are enriched in acidic residues; it reads DNEEDIPLEEEQE. The span at 48–59 shows a compositional bias: basic residues; sequence KQKKKNNKKSKK. Over residues 63–78 the composition is skewed to acidic residues; it reads TEDDDDEAETKEDDAA. A compositionally biased stretch (basic and acidic residues) spans 150–163; that stretch reads AAKEGKTTATKEEE. 4 stretches are compositionally biased toward acidic residues: residues 164–190, 218–228, 235–246, and 258–271; these read DKME…DGVL, DGEDEDSEGED, DEDEGDASDDDS, and QSSD…EEEE. Residues 272–291 are compositionally biased toward basic and acidic residues; that stretch reads AKMKEFFAPEEENQPKKKGE. Residues 293–321 carry the Q motif motif; sequence SSFQEMSLSRPILRGLTSVGFTKPTPIQA. The region spanning 324-498 is the Helicase ATP-binding domain; that stretch reads IPISLMGKDV…RAGLNKPVRI (175 aa). 337-344 contributes to the ATP binding site; that stretch reads AVTGSGKT. The short motif at 446-449 is the DEAD box element; it reads DEAD. A Helicase C-terminal domain is found at 528 to 707; sequence YLLHICKTIY…EKQLQNMEMQ (180 aa). Residues 728 to 829 form a disordered region; it reads TWFETQEDKK…KGGKGKGRRK (102 aa). Over residues 749–791 the composition is skewed to basic and acidic residues; it reads GVRDKLKSKNEGKLSNKDRKKLDTMQERKQERTYKKGSAERAG. Positions 800-815 are enriched in basic residues; sequence KVVKKVGRSAGPKKKG.

This sequence belongs to the DEAD box helicase family. DDX27/DRS1 subfamily. As to quaternary structure, associates with pre-ribosomal particles.

The protein localises to the nucleus. It localises to the nucleolus. It catalyses the reaction ATP + H2O = ADP + phosphate + H(+). ATP-binding RNA helicase involved in ribosome assembly. The polypeptide is ATP-dependent RNA helicase drs1 (drh-11) (Neurospora crassa (strain ATCC 24698 / 74-OR23-1A / CBS 708.71 / DSM 1257 / FGSC 987)).